We begin with the raw amino-acid sequence, 218 residues long: Uracil-DNA glycosylase (218 aa).

The active-site Proton acceptor is Asp-59.

Belongs to the uracil-DNA glycosylase (UDG) superfamily. UNG family.

Its subcellular location is the cytoplasm. The catalysed reaction is Hydrolyzes single-stranded DNA or mismatched double-stranded DNA and polynucleotides, releasing free uracil.. Its function is as follows. Excises uracil residues from the DNA which can arise as a result of misincorporation of dUMP residues by DNA polymerase or due to deamination of cytosine. This is Uracil-DNA glycosylase from Staphylococcus aureus (strain MSSA476).